A 237-amino-acid polypeptide reads, in one-letter code: Homeobox protein Nkx-3.1 (237 aa).

Residues 1 to 14 (MLRVAEPREPRVEA) are compositionally biased toward basic and acidic residues. 2 disordered regions span residues 1-96 (MLRV…EPES) and 108-130 (EHNPGDLASAPQVTKQPQKRSRA). Residues 24-34 (PTQSKRLTSFL) show a composition bias toward polar residues. 2 stretches are compositionally biased toward basic and acidic residues: residues 38–47 (ILRDRAERHG) and 57–71 (PDPRRDSAPEPDKAG). Residues 125–184 (QKRSRAAFSHTQVIELERKFSHQKYLSAPERAHLAKNLKLTETQVKIWFQNRRYKTKRKQ) constitute a DNA-binding region (homeobox).

The protein belongs to the NK-3 homeobox family. In terms of assembly, interacts with serum response factor (SRF). Interacts with SPDEF. Interacts with WDR77. Interacts with TOPORS which polyubiquitinates NKX3-1 and induces its proteasomal degradation. Interacts with FEM1B. Post-translationally, ubiquitinated by TOPORS; monoubiquitinated at several residues and also polyubiquitinated on single residues. As to expression, expressed mostly in the male urogenital tract, with highest expression in the epithelial cells lining the ducts of anterior, dorsolateral and ventral prostate and in the bulbourethral gland, and much lower in the seminal vesicle and the testis. Expression in the prostate increases during sexual maturation and is drastically reduced following castration. Expressed also in brain (hippocampus and external granular layer of the cerebral cortex), kidney (intralobular arteries), thymus and adrenal and salivary glands.

The protein localises to the nucleus. Transcription factor, which binds preferentially the consensus sequence 5'-TAAGT[AG]-3' and can behave as a transcriptional repressor. Plays an important role in normal prostate development, regulating proliferation of glandular epithelium and in the formation of ducts in prostate. Acts as a tumor suppressor controlling prostate carcinogenesis, as shown by the ability to suppress growth and tumorigenicity of prostate carcinoma cells. Plays a role in the formation of minor salivary glands (particularly palatine and lingual glands). The sequence is that of Homeobox protein Nkx-3.1 from Mus musculus (Mouse).